The sequence spans 380 residues: Ribosomal RNA small subunit methyltransferase, mitochondrial (380 aa).

The N-terminal 26 residues, 1-26, are a transit peptide targeting the mitochondrion; sequence MILRLKDQTLIKINSTRSYLSSLVFR. His-70, Leu-72, Gly-97, Glu-118, Asp-146, and Asn-161 together coordinate S-adenosyl-L-methionine.

It belongs to the class I-like SAM-binding methyltransferase superfamily. rRNA adenine N(6)-methyltransferase family.

It localises to the mitochondrion. It catalyses the reaction adenosine(1914)/adenosine(1915) in 18S rRNA + 4 S-adenosyl-L-methionine = N(6)-dimethyladenosine(1914)/N(6)-dimethyladenosine(1915) in 18S rRNA + 4 S-adenosyl-L-homocysteine + 4 H(+). Its function is as follows. N6-adenine methyltransferase which modifies the AA dinucleotide at the plant mitochondrial 18S rRNA nucleotides A1914 and A1915. Not active as mitochondrial transcription factor. This Arabidopsis thaliana (Mouse-ear cress) protein is Ribosomal RNA small subunit methyltransferase, mitochondrial.